The following is a 57-amino-acid chain: DNA-directed RNA polymerase subunit Rpo6 (57 aa).

Belongs to the archaeal Rpo6/eukaryotic RPB6 RNA polymerase subunit family. In terms of assembly, part of the RNA polymerase complex.

The protein resides in the cytoplasm. It localises to the chromosome. It catalyses the reaction RNA(n) + a ribonucleoside 5'-triphosphate = RNA(n+1) + diphosphate. Its function is as follows. DNA-dependent RNA polymerase (RNAP) catalyzes the transcription of DNA into RNA using the four ribonucleoside triphosphates as substrates. This Thermococcus kodakarensis (strain ATCC BAA-918 / JCM 12380 / KOD1) (Pyrococcus kodakaraensis (strain KOD1)) protein is DNA-directed RNA polymerase subunit Rpo6.